Here is a 264-residue protein sequence, read N- to C-terminus: Regulatory protein RecX (264 aa).

This sequence belongs to the RecX family.

The protein resides in the cytoplasm. Its function is as follows. Modulates RecA activity. This is Regulatory protein RecX from Limosilactobacillus reuteri (strain DSM 20016) (Lactobacillus reuteri).